Reading from the N-terminus, the 210-residue chain is NAD(P)H-quinone oxidoreductase subunit I (210 aa).

4Fe-4S ferredoxin-type domains are found at residues 54–83 (GRIH…VDWV) and 94–123 (YSYS…VTED). Positions 63, 66, 69, 73, 103, 106, 109, and 113 each coordinate [4Fe-4S] cluster.

Belongs to the complex I 23 kDa subunit family. NDH-1 is composed of at least 11 different subunits. [4Fe-4S] cluster serves as cofactor.

The protein resides in the cellular thylakoid membrane. It carries out the reaction a plastoquinone + NADH + (n+1) H(+)(in) = a plastoquinol + NAD(+) + n H(+)(out). It catalyses the reaction a plastoquinone + NADPH + (n+1) H(+)(in) = a plastoquinol + NADP(+) + n H(+)(out). NDH-1 shuttles electrons from an unknown electron donor, via FMN and iron-sulfur (Fe-S) centers, to quinones in the respiratory and/or the photosynthetic chain. The immediate electron acceptor for the enzyme in this species is believed to be plastoquinone. Couples the redox reaction to proton translocation, and thus conserves the redox energy in a proton gradient. This is NAD(P)H-quinone oxidoreductase subunit I from Synechococcus sp. (strain JA-3-3Ab) (Cyanobacteria bacterium Yellowstone A-Prime).